A 175-amino-acid chain; its full sequence is ATP synthase subunit b, chloroplastic (175 aa).

The chain crosses the membrane as a helical span at residues 26 to 44 (VINLAVVIGVVVSFVGDAV).

This sequence belongs to the ATPase B chain family. As to quaternary structure, F-type ATPases have 2 components, F(1) - the catalytic core - and F(0) - the membrane proton channel. F(1) has five subunits: alpha(3), beta(3), gamma(1), delta(1), epsilon(1). F(0) has four main subunits: a(1), b(1), b'(1) and c(10-14). The alpha and beta chains form an alternating ring which encloses part of the gamma chain. F(1) is attached to F(0) by a central stalk formed by the gamma and epsilon chains, while a peripheral stalk is formed by the delta, b and b' chains.

The protein localises to the plastid. Its subcellular location is the chloroplast thylakoid membrane. Its function is as follows. F(1)F(0) ATP synthase produces ATP from ADP in the presence of a proton or sodium gradient. F-type ATPases consist of two structural domains, F(1) containing the extramembraneous catalytic core and F(0) containing the membrane proton channel, linked together by a central stalk and a peripheral stalk. During catalysis, ATP synthesis in the catalytic domain of F(1) is coupled via a rotary mechanism of the central stalk subunits to proton translocation. Component of the F(0) channel, it forms part of the peripheral stalk, linking F(1) to F(0). The polypeptide is ATP synthase subunit b, chloroplastic (Tupiella akineta (Green alga)).